Here is a 611-residue protein sequence, read N- to C-terminus: Aspartate--tRNA ligase, mitochondrial (611 aa).

A mitochondrion-targeting transit peptide spans 1–30; the sequence is MVLSRLPACLLPLVGTKVSIQGWLVATSRQ. E192 serves as a coordination point for L-aspartate. The tract at residues 216-219 is aspartate; that stretch reads QQYK. Position 238 (R238) interacts with L-aspartate. Residues 238 to 240 and E502 each bind ATP; that span reads RDE. Residue R509 coordinates L-aspartate. An ATP-binding site is contributed by 554–557; sequence GFDR.

This sequence belongs to the class-II aminoacyl-tRNA synthetase family. Type 1 subfamily.

It is found in the mitochondrion. It carries out the reaction tRNA(Asp) + L-aspartate + ATP = L-aspartyl-tRNA(Asp) + AMP + diphosphate. This Schizosaccharomyces pombe (strain 972 / ATCC 24843) (Fission yeast) protein is Aspartate--tRNA ligase, mitochondrial (msd1).